The chain runs to 87 residues: Ragulator complex protein LAMTOR4 homolog (87 aa).

This sequence belongs to the LAMTOR4 family. Part of the Ragulator complex.

The protein localises to the lysosome. Its function is as follows. Regulator of the TOR pathway, a signaling cascade that promotes cell growth in response to growth factors, energy levels, and amino acids. As part of the Ragulator complex, may activate the TOR signaling cascade in response to amino acids. In Dictyostelium discoideum (Social amoeba), this protein is Ragulator complex protein LAMTOR4 homolog.